The following is a 2215-amino-acid chain: Unconventional myosin-VIIa (2215 aa).

Residues 65-741 (HGVEDMIRLG…HDMLLEVERD (677 aa)) form the Myosin motor domain. 158-165 (GESGAGKT) is a binding site for ATP. The segment at 632 to 639 (FVRCIKPN) is actin-binding. 5 consecutive IQ domains span residues 745–765 (TDRV…SNFL), 768–788 (KSAA…KNYE), 791–811 (RLGF…KQYR), 814–834 (RQRI…KAFR), and 837–857 (LWAV…RLHR). Residues 858–935 (RLRVEYQRRL…LEQMEKARHE (78 aa)) form an SAH region. The MyTH4 1 domain occupies 1017–1253 (YTRRPLKQPL…PSWLELQATK (237 aa)). The FERM 1 domain maps to 1258 to 1602 (IMLPVTFMDG…LVVTFLEGLR (345 aa)). The residue at position 1563 (Thr-1563) is a Phosphothreonine. Position 1569 is a phosphoserine (Ser-1569). Position 1571 is a phosphothreonine (Thr-1571). The SH3 domain maps to 1603–1672 (KRSKYVVALQ…PTDCVYVMPT (70 aa)). The MyTH4 2 domain maps to 1747–1896 (HTREPLKQAL…PHLVEVEAIQ (150 aa)). Residues 1902–2205 (IFHKVYFPDD…SYISQMLTAM (304 aa)) form the FERM 2 domain.

Belongs to the TRAFAC class myosin-kinesin ATPase superfamily. Myosin family. In terms of assembly, might homodimerize in a two headed molecule through the formation of a coiled-coil rod. Identified in a complex with USH1C and USH1G. Interacts with MYRIP. Interacts with RPE65. Interacts with CIB2. May interact with CALM. Interacts with WHRN. Interacts with PLEKHB1 (via PH domain). Interacts with PCDH15. Interacts with TWF2. Interacts with USH1G. Interacts with MYH9. Interacts (via MyTH4-FERM domains) with cytoplasmic regions of ADGRV1 and USH2A. Interacts with PDZD7 (via MyTH4-FERM domains). Interacts with CALML4. In terms of tissue distribution, detected in mechanosensory stereocilia of cochlea hair cells (at protein level). Expressed in the retina, cochlea, kidney and liver.

Its subcellular location is the cytoplasm. The protein localises to the cell cortex. The protein resides in the cytoskeleton. It is found in the synapse. Functionally, myosins are actin-based motor molecules with ATPase activity. Unconventional myosins serve in intracellular movements. Their highly divergent tails bind to membranous compartments, which are then moved relative to actin filaments. In the retina, plays an important role in the renewal of the outer photoreceptor disks. Plays an important role in the distribution and migration of retinal pigment epithelial (RPE) melanosomes and phagosomes, and in the regulation of opsin transport in retinal photoreceptors. Mediates intracellular transport of RPE65 in the retina pigment epithelium. In the inner ear, plays an important role in differentiation, morphogenesis and organization of cochlear hair cell bundles. Motor protein that is a part of the functional network formed by USH1C, USH1G, CDH23 and MYO7A that mediates mechanotransduction in cochlear hair cells. Required for normal hearing. Involved in hair-cell vesicle trafficking of aminoglycosides, which are known to induce ototoxicity. This is Unconventional myosin-VIIa (Myo7a) from Mus musculus (Mouse).